We begin with the raw amino-acid sequence, 463 residues long: Asparagine--tRNA ligase (463 aa).

This sequence belongs to the class-II aminoacyl-tRNA synthetase family. In terms of assembly, homodimer.

It is found in the cytoplasm. It carries out the reaction tRNA(Asn) + L-asparagine + ATP = L-asparaginyl-tRNA(Asn) + AMP + diphosphate + H(+). This chain is Asparagine--tRNA ligase, found in Clostridium acetobutylicum (strain ATCC 824 / DSM 792 / JCM 1419 / IAM 19013 / LMG 5710 / NBRC 13948 / NRRL B-527 / VKM B-1787 / 2291 / W).